The chain runs to 282 residues: MHVGIVAQRGNERATSLAGEIREQLRALEVTVWVDTATAEALACAGECGRDTTAFTDCDLVVSIGGDGTFLFAARGAGATPILGVNLGEVGFLNAVAPADAVEAVREEVNRYRETGAVRCREVPRVVAAGDGWASTPALNEVAIQGEQRGHGHGVAVDVRVDGSQYEATRADGVLVATPTGSTAYNLSEGGPLVQPSVDALVVTEMCGADALPPLVTGLDSEIRIRVETLDDGGEGRVVVASDGGRLTRVDPPVEMTVTAADEPARVAGPAADFFEALSKLE.

Aspartate 67 (proton acceptor) is an active-site residue. Residues 67–68 (DG), 140–141 (NE), histidine 151, arginine 170, aspartate 172, and 183–188 (TAYNLS) contribute to the NAD(+) site.

The protein belongs to the NAD kinase family. Requires a divalent metal cation as cofactor.

It is found in the cytoplasm. The catalysed reaction is NAD(+) + ATP = ADP + NADP(+) + H(+). Involved in the regulation of the intracellular balance of NAD and NADP, and is a key enzyme in the biosynthesis of NADP. Catalyzes specifically the phosphorylation on 2'-hydroxyl of the adenosine moiety of NAD to yield NADP. The protein is NAD kinase of Halobacterium salinarum (strain ATCC 700922 / JCM 11081 / NRC-1) (Halobacterium halobium).